Reading from the N-terminus, the 842-residue chain is Elongation factor 2 (842 aa).

The region spanning 17-253 (SNVRNMSVIA…LWGENYFNPK (237 aa)) is the tr-type G domain. GTP contacts are provided by residues 26–33 (AHVDHGKS), 104–108 (DSPGH), and 158–161 (NKVD). Position 568 is a phosphoserine (Ser-568). Phosphothreonine is present on Thr-574. Residue His-699 is modified to Diphthamide.

Belongs to the TRAFAC class translation factor GTPase superfamily. Classic translation factor GTPase family. EF-G/EF-2 subfamily.

It localises to the cytoplasm. Catalyzes the GTP-dependent ribosomal translocation step during translation elongation. During this step, the ribosome changes from the pre-translocational (PRE) to the post-translocational (POST) state as the newly formed A-site-bound peptidyl-tRNA and P-site-bound deacylated tRNA move to the P and E sites, respectively. Catalyzes the coordinated movement of the two tRNA molecules, the mRNA and conformational changes in the ribosome. The protein is Elongation factor 2 (eft201) of Schizosaccharomyces pombe (strain 972 / ATCC 24843) (Fission yeast).